Here is a 111-residue protein sequence, read N- to C-terminus: MTAAQFTNVTVNAQATISYDGRCSSHTIMFEDGRHKTLGVILPCDNLVEHYHFSTNTSERIEITSGECEVKINGEEEFSYYRAGQSFVVEGNSGFNLRTEQIVQYICHLEG.

It belongs to the nucleoside phosphorylase PpnP family.

It catalyses the reaction a purine D-ribonucleoside + phosphate = a purine nucleobase + alpha-D-ribose 1-phosphate. The catalysed reaction is adenosine + phosphate = alpha-D-ribose 1-phosphate + adenine. The enzyme catalyses cytidine + phosphate = cytosine + alpha-D-ribose 1-phosphate. It carries out the reaction guanosine + phosphate = alpha-D-ribose 1-phosphate + guanine. It catalyses the reaction inosine + phosphate = alpha-D-ribose 1-phosphate + hypoxanthine. The catalysed reaction is thymidine + phosphate = 2-deoxy-alpha-D-ribose 1-phosphate + thymine. The enzyme catalyses uridine + phosphate = alpha-D-ribose 1-phosphate + uracil. It carries out the reaction xanthosine + phosphate = alpha-D-ribose 1-phosphate + xanthine. In terms of biological role, catalyzes the phosphorolysis of diverse nucleosides, yielding D-ribose 1-phosphate and the respective free bases. Can use uridine, adenosine, guanosine, cytidine, thymidine, inosine and xanthosine as substrates. Also catalyzes the reverse reactions. This chain is Pyrimidine/purine nucleoside phosphorylase 1, found in Psychrobacter cryohalolentis (strain ATCC BAA-1226 / DSM 17306 / VKM B-2378 / K5).